Here is a 943-residue protein sequence, read N- to C-terminus: Isoleucine--tRNA ligase (943 aa).

The 'HIGH' region motif lies at 58-68 (PYANGNIHIGH). Glu-567 lines the L-isoleucyl-5'-AMP pocket. The 'KMSKS' region signature appears at 608 to 612 (KMSKS). Lys-611 contacts ATP. Residues Cys-906, Cys-909, Cys-926, and Cys-929 each coordinate Zn(2+).

The protein belongs to the class-I aminoacyl-tRNA synthetase family. IleS type 1 subfamily. In terms of assembly, monomer. Requires Zn(2+) as cofactor.

Its subcellular location is the cytoplasm. The enzyme catalyses tRNA(Ile) + L-isoleucine + ATP = L-isoleucyl-tRNA(Ile) + AMP + diphosphate. Functionally, catalyzes the attachment of isoleucine to tRNA(Ile). As IleRS can inadvertently accommodate and process structurally similar amino acids such as valine, to avoid such errors it has two additional distinct tRNA(Ile)-dependent editing activities. One activity is designated as 'pretransfer' editing and involves the hydrolysis of activated Val-AMP. The other activity is designated 'posttransfer' editing and involves deacylation of mischarged Val-tRNA(Ile). In Azotobacter vinelandii (strain DJ / ATCC BAA-1303), this protein is Isoleucine--tRNA ligase.